Reading from the N-terminus, the 474-residue chain is E3 ubiquitin-protein ligase CBL-C (474 aa).

The 4H stretch occupies residues 7–145; sequence PWGRQWEEAR…HALFPGGKYC (139 aa). The Cbl-PTB domain occupies 7–321; that stretch reads PWGRQWEEAR…GKTHNPDLTE (315 aa). The tract at residues 146 to 218 is EF-hand-like; sequence GHMYQLTKAP…FEFDVFTRLF (73 aa). Ca(2+) contacts are provided by Asp-199, Thr-201, and Glu-210. Residues 219 to 321 form an SH2-like region; the sequence is QPWPTLLKNW…GKTHNPDLTE (103 aa). Arg-264 contacts 4-O-phospho-L-tyrosine. Residues 322–350 are linker; it reads LGQAEPQQRIHVSEEQLQLYWAMDSTFEL. Tyr-341 carries the phosphotyrosine; by SRC modification. The segment at 351-390 adopts an RING-type zinc-finger fold; the sequence is CKICAESNKDVKIEPCGHLLCSCCLAAWQHSDSQTCPFCR. The tract at residues 351-474 is interaction with RET; the sequence is CKICAESNKD…ALGPQDPAPA (124 aa). The tract at residues 409-474 is disordered; the sequence is TAEDSGNSSD…ALGPQDPAPA (66 aa). Over residues 432-441 the composition is skewed to pro residues; it reads SAPPLPPRPD.

In terms of assembly, interacts with ubiquitin-conjugating enzyme E2 UBE2D2 and UBE2D3. Isoform 1 interacts with EGFR (tyrosine phosphorylated). Interacts with the SH3 domain proteins LYN and CRK. Interacts (via RING-type zinc finger) with TGFB1I1 (via LIM zinc-binding domain 2); the interaction is direct and enhances the E3 activity. Interacts directly with RET (inactive) and CD2AP; dissociates from RET upon RET activation by GDNF which also increases the interaction with CD2AP suggesting dissociation as CBLC:CD2AP complex. Interacts with SRC; the interaction is enhanced when SRC is phosphorylated at 'Tyr-419'. Phosphorylated on multiple tyrosine residues by SRC. Isoform 1, but not isoform 2, is phosphorylated on tyrosines by EGFR. In terms of processing, autoubiquitinated when phosphorylated at Tyr-341, enhanced by SRC; suggesting proteasomal degradation. Ubiquitous.

It carries out the reaction S-ubiquitinyl-[E2 ubiquitin-conjugating enzyme]-L-cysteine + [acceptor protein]-L-lysine = [E2 ubiquitin-conjugating enzyme]-L-cysteine + N(6)-ubiquitinyl-[acceptor protein]-L-lysine.. With respect to regulation, phosphorylation at Tyr-341 is necessary and sufficient for the activation of E3 activity. In terms of biological role, acts as an E3 ubiquitin-protein ligase, which accepts ubiquitin from specific E2 ubiquitin-conjugating enzymes, and then transfers it to substrates promoting their degradation by the proteasome. Functionally coupled with the E2 ubiquitin-protein ligases UB2D1, UB2D2 and UB2D3. Regulator of EGFR mediated signal transduction; upon EGF activation, ubiquitinates EGFR. Isoform 1, but not isoform 2, inhibits EGF stimulated MAPK1 activation. Promotes ubiquitination of SRC phosphorylated at 'Tyr-419'. In collaboration with CD2AP may act as regulatory checkpoint for Ret signaling by modulating the rate of RET degradation after ligand activation; CD2AP converts it from an inhibitor to a promoter of RET degradation; the function limits the potency of GDNF on neuronal survival. This is E3 ubiquitin-protein ligase CBL-C (CBLC) from Homo sapiens (Human).